We begin with the raw amino-acid sequence, 261 residues long: Carbonic anhydrase 1 (261 aa).

Residues 1-31 are disordered; that stretch reads MASPDWGYDDKNGPEQWSKLYPIANGNNQSP. N-acetylalanine is present on Ala2. In terms of domain architecture, Alpha-carbonic anhydrase spans 4–261; sequence PDWGYDDKNG…LKGRTVRASF (258 aa). The active-site Proton donor/acceptor is His65. Zn(2+) is bound by residues His65, His68, His95, His97, and His120. Residues Thr200 and 200-201 contribute to the substrate site; that span reads TH. Zn(2+) is bound at residue His201. Positions 241 to 261 are disordered; it reads PMQHNNRPTQPLKGRTVRASF.

Belongs to the alpha-carbonic anhydrase family. Zn(2+) is required as a cofactor.

Its subcellular location is the cytoplasm. The catalysed reaction is hydrogencarbonate + H(+) = CO2 + H2O. It carries out the reaction urea = cyanamide + H2O. Activated by histamine, imidazole, L-adrenaline, L- and D-histidine, and L- and D-phenylalanine. Inhibited by coumarins, sulfonamide derivatives such as acetazolamide, benzenesulfonamide and derivatives (4-carboxyethylbenzene-sulfonamide, 4-carboxyethylbenzene-sulfonamide ethyl ester, 4-(acetyl-2-aminoethyl)benzene-sulfonamide, 4-aminoethylbenzene-sulfonamide), and 'prong inhibitors' BR15, BR17, BR22 and BR30. Activated by a short exposition to Foscarnet (phosphonoformate trisodium salt), but inhibited by a long one. Esterase activity weakly reduced by cyanamide. Catalyzes the reversible hydration of carbon dioxide. Can hydrate cyanamide to urea. The chain is Carbonic anhydrase 1 (CA1) from Homo sapiens (Human).